The following is a 267-amino-acid chain: Digeranylgeranylglyceryl phosphate synthase (267 aa).

Helical transmembrane passes span 10–30 (ANCV…GALL), 33–53 (LHTP…GNAI), 80–100 (AALI…GLIN), 104–121 (LALA…AARL), 139–159 (TFLF…LSIL), 198–218 (VLAS…PLGI), and 247–267 (QRWI…GYHI).

It belongs to the UbiA prenyltransferase family. DGGGP synthase subfamily. The cofactor is Mg(2+).

The protein resides in the cell membrane. The enzyme catalyses sn-3-O-(geranylgeranyl)glycerol 1-phosphate + (2E,6E,10E)-geranylgeranyl diphosphate = 2,3-bis-O-(geranylgeranyl)-sn-glycerol 1-phosphate + diphosphate. It functions in the pathway membrane lipid metabolism; glycerophospholipid metabolism. Its function is as follows. Prenyltransferase that catalyzes the transfer of the geranylgeranyl moiety of geranylgeranyl diphosphate (GGPP) to the C2 hydroxyl of (S)-3-O-geranylgeranylglyceryl phosphate (GGGP). This reaction is the second ether-bond-formation step in the biosynthesis of archaeal membrane lipids. In Methanothrix thermoacetophila (strain DSM 6194 / JCM 14653 / NBRC 101360 / PT) (Methanosaeta thermophila), this protein is Digeranylgeranylglyceryl phosphate synthase.